The following is a 232-amino-acid chain: Dehydrogenase OXI1 (232 aa).

The N-terminal stretch at 1–20 is a signal peptide; that stretch reads MTETFKVAITFVSPSSEALA. Leucine 19 is a binding site for NADP(+). N-linked (GlcNAc...) asparagine glycosylation occurs at asparagine 28. The NADP(+) site is built by aspartate 42, asparagine 70, and lysine 103. A glycan (N-linked (GlcNAc...) asparagine) is linked at asparagine 117. Residues serine 119 and serine 121 each act as proton donor in the active site. NADP(+)-binding residues include tyrosine 133, lysine 137, and threonine 168. The active-site Proton acceptor is the tyrosine 133. Lysine 137 serves as the catalytic Lowers pKa of active site Tyr.

The protein belongs to the short-chain dehydrogenases/reductases (SDR) family.

It catalyses the reaction a primary alcohol + NAD(+) = an aldehyde + NADH + H(+). It carries out the reaction a secondary alcohol + NAD(+) = a ketone + NADH + H(+). It functions in the pathway mycotoxin biosynthesis. In terms of biological role, dehydrogenase; part of the Tox1A locus, one of the 2 loci that mediate the biosynthesis of T-toxin, a family of linear polyketides 37 to 45 carbons in length, of which the major component is 41 carbons, and which leads to high virulence to maize. One of the PKSs (PKS1 or PKS2) could synthesize a precursor, used subsequently by the other PKS as starter unit, to add additional carbons. Variability in the length of the final carbon backbone C35-47 could be achieved by varying the number of condensation cycles, or use of different starter or extender units or might be due to decarboxylation of the penultimate product, catalyzed by DEC1. Additional proteins are required for the biosynthesis of T-toxin, including oxidoreductases RED1, RED2, RED3, LAM1 and OXI1, as well as esterase TOX9. The chain is Dehydrogenase OXI1 from Cochliobolus heterostrophus (strain C4 / ATCC 48331 / race T) (Southern corn leaf blight fungus).